The primary structure comprises 360 residues: Photosystem II protein D1 (360 aa).

Transmembrane regions (helical) follow at residues Tyr29–Thr46, Gln118–Leu133, and Trp142–Ala156. Tyr126 provides a ligand contact to pheophytin a. [CaMn4O5] cluster is bound by residues Asp170 and Glu189. A helical membrane pass occupies residues Phe197 to Leu218. Residue His198 coordinates chlorophyll a. A quinone contacts are provided by residues His215 and Ser264–Phe265. His215 is a binding site for Fe cation. Fe cation is bound at residue His272. A helical transmembrane segment spans residues Phe274 to Met288. [CaMn4O5] cluster-binding residues include His332, Glu333, Asp342, and Ala344. A propeptide spanning residues Ser345–Gly360 is cleaved from the precursor.

It belongs to the reaction center PufL/M/PsbA/D family. PSII is composed of 1 copy each of membrane proteins PsbA, PsbB, PsbC, PsbD, PsbE, PsbF, PsbH, PsbI, PsbJ, PsbK, PsbL, PsbM, PsbT, PsbX, PsbY, PsbZ, Psb30/Ycf12, peripheral proteins PsbO, CyanoQ (PsbQ), PsbU, PsbV and a large number of cofactors. It forms dimeric complexes. It depends on The D1/D2 heterodimer binds P680, chlorophylls that are the primary electron donor of PSII, and subsequent electron acceptors. It shares a non-heme iron and each subunit binds pheophytin, quinone, additional chlorophylls, carotenoids and lipids. D1 provides most of the ligands for the Mn4-Ca-O5 cluster of the oxygen-evolving complex (OEC). There is also a Cl(-1) ion associated with D1 and D2, which is required for oxygen evolution. The PSII complex binds additional chlorophylls, carotenoids and specific lipids. as a cofactor. In terms of processing, tyr-161 forms a radical intermediate that is referred to as redox-active TyrZ, YZ or Y-Z. Post-translationally, C-terminally processed by CtpA; processing is essential to allow assembly of the oxygen-evolving complex and thus photosynthetic growth.

The protein resides in the cellular thylakoid membrane. The enzyme catalyses 2 a plastoquinone + 4 hnu + 2 H2O = 2 a plastoquinol + O2. Its function is as follows. Photosystem II (PSII) is a light-driven water:plastoquinone oxidoreductase that uses light energy to abstract electrons from H(2)O, generating O(2) and a proton gradient subsequently used for ATP formation. It consists of a core antenna complex that captures photons, and an electron transfer chain that converts photonic excitation into a charge separation. The D1/D2 (PsbA/PsbD) reaction center heterodimer binds P680, the primary electron donor of PSII as well as several subsequent electron acceptors. This Synechocystis sp. (strain PCC 6714) (Aphanocapsa sp. (strain PCC 6714)) protein is Photosystem II protein D1.